A 231-amino-acid polypeptide reads, in one-letter code: Large ribosomal subunit protein uL1 (231 aa).

The protein belongs to the universal ribosomal protein uL1 family. As to quaternary structure, part of the 50S ribosomal subunit.

Functionally, binds directly to 23S rRNA. The L1 stalk is quite mobile in the ribosome, and is involved in E site tRNA release. In terms of biological role, protein L1 is also a translational repressor protein, it controls the translation of the L11 operon by binding to its mRNA. The chain is Large ribosomal subunit protein uL1 from Thiobacillus denitrificans (strain ATCC 25259 / T1).